We begin with the raw amino-acid sequence, 89 residues long: MSWSVEKKREIISTFGRNVKDTGSTEVQVALLTERIDHLKHHFLKHKKDHHSRRGLLKMVAHRRRLLKYLKENNMLHYTNLIRNLGLRH.

Belongs to the universal ribosomal protein uS15 family. As to quaternary structure, part of the 30S ribosomal subunit. Forms a bridge to the 50S subunit in the 70S ribosome, contacting the 23S rRNA.

Its function is as follows. One of the primary rRNA binding proteins, it binds directly to 16S rRNA where it helps nucleate assembly of the platform of the 30S subunit by binding and bridging several RNA helices of the 16S rRNA. In terms of biological role, forms an intersubunit bridge (bridge B4) with the 23S rRNA of the 50S subunit in the ribosome. This chain is Small ribosomal subunit protein uS15, found in Blochmanniella pennsylvanica (strain BPEN).